The primary structure comprises 213 residues: Triosephosphate isomerase (213 aa).

A substrate-binding site is contributed by 7–9 (NLK). His-88 serves as the catalytic Electrophile. Residue Glu-136 is the Proton acceptor of the active site. Substrate contacts are provided by Ile-141 and Gly-174.

This sequence belongs to the triosephosphate isomerase family. Homotetramer; dimer of dimers.

It localises to the cytoplasm. It catalyses the reaction D-glyceraldehyde 3-phosphate = dihydroxyacetone phosphate. It functions in the pathway carbohydrate biosynthesis; gluconeogenesis. Its pathway is carbohydrate degradation; glycolysis; D-glyceraldehyde 3-phosphate from glycerone phosphate: step 1/1. Its function is as follows. Involved in the gluconeogenesis. Catalyzes stereospecifically the conversion of dihydroxyacetone phosphate (DHAP) to D-glyceraldehyde-3-phosphate (G3P). The sequence is that of Triosephosphate isomerase from Thermoplasma volcanium (strain ATCC 51530 / DSM 4299 / JCM 9571 / NBRC 15438 / GSS1).